The primary structure comprises 197 residues: Dephospho-CoA kinase (197 aa).

Residues 2 to 197 (IIGITGGIAS…SALLLLANPR (196 aa)) form the DPCK domain. ATP is bound at residue 10 to 15 (ASGKST).

This sequence belongs to the CoaE family.

It is found in the cytoplasm. It catalyses the reaction 3'-dephospho-CoA + ATP = ADP + CoA + H(+). It functions in the pathway cofactor biosynthesis; coenzyme A biosynthesis; CoA from (R)-pantothenate: step 5/5. In terms of biological role, catalyzes the phosphorylation of the 3'-hydroxyl group of dephosphocoenzyme A to form coenzyme A. This is Dephospho-CoA kinase from Streptococcus pyogenes serotype M1.